A 160-amino-acid chain; its full sequence is Regulatory protein RecX (160 aa).

Belongs to the RecX family.

Its subcellular location is the cytoplasm. Modulates RecA activity. The protein is Regulatory protein RecX of Xanthomonas oryzae pv. oryzae (strain MAFF 311018).